Reading from the N-terminus, the 477-residue chain is UDP-N-acetylmuramate--L-alanine ligase (477 aa).

122 to 128 contacts ATP; sequence GTHGKTT.

This sequence belongs to the MurCDEF family.

It is found in the cytoplasm. The enzyme catalyses UDP-N-acetyl-alpha-D-muramate + L-alanine + ATP = UDP-N-acetyl-alpha-D-muramoyl-L-alanine + ADP + phosphate + H(+). It functions in the pathway cell wall biogenesis; peptidoglycan biosynthesis. Cell wall formation. This Xylella fastidiosa (strain M12) protein is UDP-N-acetylmuramate--L-alanine ligase.